Reading from the N-terminus, the 276-residue chain is Diaminopimelate epimerase (276 aa).

N11, Q44, and N64 together coordinate substrate. Catalysis depends on C73, which acts as the Proton donor. Residues I74–N75, N159, N192, and E210–R211 each bind substrate. C219 functions as the Proton acceptor in the catalytic mechanism. G220–S221 lines the substrate pocket.

The protein belongs to the diaminopimelate epimerase family. Homodimer.

It is found in the cytoplasm. It catalyses the reaction (2S,6S)-2,6-diaminopimelate = meso-2,6-diaminopimelate. It participates in amino-acid biosynthesis; L-lysine biosynthesis via DAP pathway; DL-2,6-diaminopimelate from LL-2,6-diaminopimelate: step 1/1. Its function is as follows. Catalyzes the stereoinversion of LL-2,6-diaminopimelate (L,L-DAP) to meso-diaminopimelate (meso-DAP), a precursor of L-lysine and an essential component of the bacterial peptidoglycan. This is Diaminopimelate epimerase from Wigglesworthia glossinidia brevipalpis.